The sequence spans 89 residues: Small ribosomal subunit protein uS15 (89 aa).

The protein belongs to the universal ribosomal protein uS15 family. Part of the 30S ribosomal subunit. Forms a bridge to the 50S subunit in the 70S ribosome, contacting the 23S rRNA.

One of the primary rRNA binding proteins, it binds directly to 16S rRNA where it helps nucleate assembly of the platform of the 30S subunit by binding and bridging several RNA helices of the 16S rRNA. Its function is as follows. Forms an intersubunit bridge (bridge B4) with the 23S rRNA of the 50S subunit in the ribosome. This Jannaschia sp. (strain CCS1) protein is Small ribosomal subunit protein uS15.